Reading from the N-terminus, the 274-residue chain is 2,3,4,5-tetrahydropyridine-2,6-dicarboxylate N-succinyltransferase (274 aa).

The substrate site is built by arginine 104 and aspartate 141.

This sequence belongs to the transferase hexapeptide repeat family. In terms of assembly, homotrimer.

It is found in the cytoplasm. The enzyme catalyses (S)-2,3,4,5-tetrahydrodipicolinate + succinyl-CoA + H2O = (S)-2-succinylamino-6-oxoheptanedioate + CoA. It participates in amino-acid biosynthesis; L-lysine biosynthesis via DAP pathway; LL-2,6-diaminopimelate from (S)-tetrahydrodipicolinate (succinylase route): step 1/3. The protein is 2,3,4,5-tetrahydropyridine-2,6-dicarboxylate N-succinyltransferase of Shewanella pealeana (strain ATCC 700345 / ANG-SQ1).